A 108-amino-acid chain; its full sequence is MGVQVETISPGDGRTFPKRGQTCVVHYTGMLEDGKKFDSSRDRNKPFKFMLGKQEVIRGWEEGVAQMSVGQRAKLTISPDYAYGATGHPGIIPPHATLVFDVELLKLE.

The PPIase FKBP-type domain maps to 20–108 (GQTCVVHYTG…VFDVELLKLE (89 aa)). Lysine 53 is subject to N6-acetyllysine; alternate. Lysine 53 carries the N6-succinyllysine; alternate modification.

This sequence belongs to the FKBP-type PPIase family. FKBP1 subfamily. As to quaternary structure, interacts with TGFBR1; prevents TGFBR1 phosphorylation by TGFBR2 and stabilizes it in the inactive conformation. Interacts with ACVR1B and SMAD7. Identified in a complex composed of RYR1, PDE4D, PKA, FKBP1A and protein phosphatase 1 (PP1). Interacts directly with RYR2 and RYR3. Interacts with GLMN; rapamycin and FK506 abolish the interaction with GLMN in a dose dependent manner. Interacts directly with RYR1.

The protein resides in the cytoplasm. It is found in the cytosol. Its subcellular location is the sarcoplasmic reticulum membrane. The enzyme catalyses [protein]-peptidylproline (omega=180) = [protein]-peptidylproline (omega=0). Inhibited by both FK506 and rapamycin. Functionally, keeps in an inactive conformation TGFBR1, the TGF-beta type I serine/threonine kinase receptor, preventing TGF-beta receptor activation in absence of ligand. Recruits SMAD7 to ACVR1B which prevents the association of SMAD2 and SMAD3 with the activin receptor complex, thereby blocking the activin signal. May modulate the RYR1 calcium channel activity. PPIases accelerate the folding of proteins. It catalyzes the cis-trans isomerization of proline imidic peptide bonds in oligopeptides. This Homo sapiens (Human) protein is Peptidyl-prolyl cis-trans isomerase FKBP1A (FKBP1A).